The primary structure comprises 355 residues: Histidinol-phosphate aminotransferase (355 aa).

N6-(pyridoxal phosphate)lysine is present on Lys-218.

Belongs to the class-II pyridoxal-phosphate-dependent aminotransferase family. Histidinol-phosphate aminotransferase subfamily. As to quaternary structure, homodimer. It depends on pyridoxal 5'-phosphate as a cofactor.

It catalyses the reaction L-histidinol phosphate + 2-oxoglutarate = 3-(imidazol-4-yl)-2-oxopropyl phosphate + L-glutamate. It participates in amino-acid biosynthesis; L-histidine biosynthesis; L-histidine from 5-phospho-alpha-D-ribose 1-diphosphate: step 7/9. This is Histidinol-phosphate aminotransferase from Pelodictyon phaeoclathratiforme (strain DSM 5477 / BU-1).